A 42-amino-acid polypeptide reads, in one-letter code: Serine protease inhibitor 8 (42 aa).

This sequence belongs to the protease inhibitor I3 (leguminous Kunitz-type inhibitor) family. As to expression, cortex of potato tuber.

Its function is as follows. Potent inhibitor of animal pancreatic trypsin (serine protease). This chain is Serine protease inhibitor 8, found in Solanum tuberosum (Potato).